The sequence spans 69 residues: Amphipathic peptide Hp1404 (69 aa).

The N-terminal stretch at 1 to 23 (MKTQFAILMITVVLMQMLVQTEG) is a signal peptide. At Phe-37 the chain carries Phenylalanine amide. A propeptide spanning residues 41–69 (GLKNLDQLDDSFDSDLSDADVKLLREMFK) is cleaved from the precursor.

It belongs to the non-disulfide-bridged peptide (NDBP) superfamily. Short antimicrobial peptide (group 4) family. In terms of tissue distribution, expressed by the venom gland.

Its subcellular location is the secreted. It is found in the target cell membrane. Its activity is regulated as follows. Antibacterial activity is decreased by serum. Antimicrobial peptide that acts by inducing concentration-dependent membrane disruption, implying a membrane-lytic mode of action. Acts with potent activity against Gram-positive bacteria (MIC=4.04-16.16 uM) including methicillin-resistant S.aureus (MRSA). Its activity on Gram-negative bacteria is controversial. Li and colleagues (2014) describe no activity towards E.coli and P.aeruginosa, while Kim and colleagues (2018) describe a potent activity towards P.aeruginosa (MIC=3.13-12.5 uM), and Luo and colleagues (2021) describe a potent activity against antibiotic-sensitive and -resistant Acinetobacter baumannii strains (MIC=3.2-10 uM). On S.aureus, possibly acts by impairing an unknown intracellular target and/or by interacting with the membrane, leading to the lateral expansion of the membrane area at high MIC concentrations, resulting in the formation of mesosome-like structures that leads to cell lysis. Shows moderate inhibition of P.aeruginosa biofilm formation. Administration of this peptide at sub-MIC concentrations in multiple treatments does not lead to resistance in S.aureus. Exhibits low toxicity and hemolytic activity against mammalian cell lines and BALB/c mice. In vivo, improves the survival rate of the MRSA infected BALB/c mice in the peritonitis model. This Heterometrus petersii (Asian forest scorpion) protein is Amphipathic peptide Hp1404.